Reading from the N-terminus, the 29-residue chain is Trypsin inhibitor 4 (29 aa).

3 disulfides stabilise this stretch: Cys3/Cys20, Cys10/Cys22, and Cys16/Cys28.

Belongs to the protease inhibitor I7 (squash-type serine protease inhibitor) family.

Its subcellular location is the secreted. Functionally, strongly inhibits trypsin, weakly inhibits chymotrypsin. The protein is Trypsin inhibitor 4 of Cyclanthera pedata (Achocha).